We begin with the raw amino-acid sequence, 126 residues long: Glycine cleavage system H protein (126 aa).

Residues 22–103 form the Lipoyl-binding domain; it reads KAYIGITDYA…PYGSWMALVE (82 aa). An N6-lipoyllysine modification is found at Lys63.

The protein belongs to the GcvH family. In terms of assembly, the glycine cleavage system is composed of four proteins: P, T, L and H. (R)-lipoate is required as a cofactor.

Functionally, the glycine cleavage system catalyzes the degradation of glycine. The H protein shuttles the methylamine group of glycine from the P protein to the T protein. This chain is Glycine cleavage system H protein, found in Thermoanaerobacter pseudethanolicus (strain ATCC 33223 / 39E) (Clostridium thermohydrosulfuricum).